A 215-amino-acid polypeptide reads, in one-letter code: MSKFRSLADIRRDYGELQLSEESAENDPISQFKLWFDDVLLNEKNDPTAMVLSTVDEKGYPDSRVVLLKGLENGNFIFYTNYQSAKAMQIQKNPYAALNFYWPQMARQVRVRGRVKKISSEQSDAYFSSRPIKSQFSAIVSPQSQEILDRISLEDALNQLIEEYGQKPVVRPENWGGYMIIPDEIEFWQGRDNRLHDRIHYYRHGHEWTHRRLAP.

Residues 11–14 (RRDY) and Lys-69 each bind substrate. FMN contacts are provided by residues 64–69 (RVVLLK), 79–80 (YT), Lys-86, and Gln-108. Substrate-binding residues include Tyr-126, Arg-130, and Ser-134. Residues 143-144 (QS) and Trp-188 contribute to the FMN site. 194–196 (RLH) contacts substrate. Arg-198 contacts FMN.

The protein belongs to the pyridoxamine 5'-phosphate oxidase family. In terms of assembly, homodimer. FMN is required as a cofactor.

It carries out the reaction pyridoxamine 5'-phosphate + O2 + H2O = pyridoxal 5'-phosphate + H2O2 + NH4(+). The catalysed reaction is pyridoxine 5'-phosphate + O2 = pyridoxal 5'-phosphate + H2O2. The protein operates within cofactor metabolism; pyridoxal 5'-phosphate salvage; pyridoxal 5'-phosphate from pyridoxamine 5'-phosphate: step 1/1. It participates in cofactor metabolism; pyridoxal 5'-phosphate salvage; pyridoxal 5'-phosphate from pyridoxine 5'-phosphate: step 1/1. Its function is as follows. Catalyzes the oxidation of either pyridoxine 5'-phosphate (PNP) or pyridoxamine 5'-phosphate (PMP) into pyridoxal 5'-phosphate (PLP). The protein is Pyridoxine/pyridoxamine 5'-phosphate oxidase of Legionella pneumophila (strain Lens).